A 356-amino-acid polypeptide reads, in one-letter code: Probable dual-specificity RNA methyltransferase RlmN (356 aa).

Catalysis depends on E100, which acts as the Proton acceptor. Residues 106–340 (TQQRLTVCLS…VSLRASRGLD (235 aa)) enclose the Radical SAM core domain. A disulfide bridge connects residues C113 and C345. Positions 120, 124, and 127 each coordinate [4Fe-4S] cluster. Residues 167–168 (GE), S197, 226–228 (SLH), and N302 each bind S-adenosyl-L-methionine. C345 acts as the S-methylcysteine intermediate in catalysis.

The protein belongs to the radical SAM superfamily. RlmN family. [4Fe-4S] cluster is required as a cofactor.

Its subcellular location is the cytoplasm. It carries out the reaction adenosine(2503) in 23S rRNA + 2 reduced [2Fe-2S]-[ferredoxin] + 2 S-adenosyl-L-methionine = 2-methyladenosine(2503) in 23S rRNA + 5'-deoxyadenosine + L-methionine + 2 oxidized [2Fe-2S]-[ferredoxin] + S-adenosyl-L-homocysteine. It catalyses the reaction adenosine(37) in tRNA + 2 reduced [2Fe-2S]-[ferredoxin] + 2 S-adenosyl-L-methionine = 2-methyladenosine(37) in tRNA + 5'-deoxyadenosine + L-methionine + 2 oxidized [2Fe-2S]-[ferredoxin] + S-adenosyl-L-homocysteine. Functionally, specifically methylates position 2 of adenine 2503 in 23S rRNA and position 2 of adenine 37 in tRNAs. This chain is Probable dual-specificity RNA methyltransferase RlmN, found in Prochlorococcus marinus (strain MIT 9303).